The primary structure comprises 139 residues: Transcription antitermination protein NusB (139 aa).

Belongs to the NusB family.

Its function is as follows. Involved in transcription antitermination. Required for transcription of ribosomal RNA (rRNA) genes. Binds specifically to the boxA antiterminator sequence of the ribosomal RNA (rrn) operons. The chain is Transcription antitermination protein NusB from Nitratiruptor sp. (strain SB155-2).